A 39-amino-acid polypeptide reads, in one-letter code: Mating pheromone Er-11 (39 aa).

3 disulfides stabilise this stretch: C3-C19, C10-C34, and C15-C26.

In terms of assembly, homodimer.

The protein localises to the secreted. Its function is as follows. Mating ciliate pheromones (or gamones) are diffusible extracellular communication signals that distinguish different intraspecific classes of cells commonly referred to as 'mating types'. They prepare the latter for conjugation by changing their cell surface properties. The chain is Mating pheromone Er-11 (MAT11) from Euplotes raikovi.